Consider the following 184-residue polypeptide: ATP synthase subunit b, chloroplastic (184 aa).

A helical transmembrane segment spans residues 27-49 (LATNPINLSIVIGVLIFFGKGVL).

The protein belongs to the ATPase B chain family. In terms of assembly, F-type ATPases have 2 components, F(1) - the catalytic core - and F(0) - the membrane proton channel. F(1) has five subunits: alpha(3), beta(3), gamma(1), delta(1), epsilon(1). F(0) has four main subunits: a(1), b(1), b'(1) and c(10-14). The alpha and beta chains form an alternating ring which encloses part of the gamma chain. F(1) is attached to F(0) by a central stalk formed by the gamma and epsilon chains, while a peripheral stalk is formed by the delta, b and b' chains.

It is found in the plastid. Its subcellular location is the chloroplast thylakoid membrane. Its function is as follows. F(1)F(0) ATP synthase produces ATP from ADP in the presence of a proton or sodium gradient. F-type ATPases consist of two structural domains, F(1) containing the extramembraneous catalytic core and F(0) containing the membrane proton channel, linked together by a central stalk and a peripheral stalk. During catalysis, ATP synthesis in the catalytic domain of F(1) is coupled via a rotary mechanism of the central stalk subunits to proton translocation. Component of the F(0) channel, it forms part of the peripheral stalk, linking F(1) to F(0). The chain is ATP synthase subunit b, chloroplastic from Lotus japonicus (Lotus corniculatus var. japonicus).